A 268-amino-acid polypeptide reads, in one-letter code: Agamous-like MADS-box protein AGL15 (268 aa).

The MADS-box domain maps to 1-61 (MGRGKIEIKR…GKLFEYSSTG (61 aa)). In terms of domain architecture, K-box spans 80–170 (AEEDCAEVDI…RRQVQELRSF (91 aa)). The tract at residues 205–268 (TDSDTTLQLG…PEAKRQRFSV (64 aa)) is disordered. Positions 218–232 (EAHDRRTNEGERESP) are enriched in basic and acidic residues. Polar residues predominate over residues 233 to 244 (SSDSVTTNTSSE).

In terms of assembly, homodimer. Interacts with SVP, AGL24, AP1, AGL6, AG, AGL1, AGL11, AGL5, AGL16, SOC1 and AGL21. As to expression, expressed at low levels in flowers and siliques. Also present in seedlings. Detected during embryogenesis and accumulates during early seed development (at protein level). Expressed in shoot apices and the base of leaf petioles.

It is found in the nucleus. It localises to the cytoplasm. Its function is as follows. Transcription factor involved in the negative regulation of flowering, probably through the photoperiodic pathway. Acts both as an activator and as a repressor of transcription. Binds DNA in a sequence-specific manner in large CArG motif 5'-CC (A/T)8 GG-3'. Participates probably in the regulation of programs active during the early stages of embryo development. Prevents premature perianth senescence and abscission, fruits development and seed desiccation. Stimulates the expression of at least DTA4, LEC2, FUS3, ABI3, AT4G38680/CSP2 and GRP2B/CSP4. Can enhance somatic embryo development in vitro. In Arabidopsis thaliana (Mouse-ear cress), this protein is Agamous-like MADS-box protein AGL15 (AGL15).